Reading from the N-terminus, the 416-residue chain is Thyroid hormone receptor alpha (416 aa).

The segment at 1–30 is disordered; that stretch reads MEPISNVEDPNSSEGDEKRWPDGPKRKRKN. The tract at residues 1-58 is modulating; the sequence is MEPISNVEDPNSSEGDEKRWPDGPKRKRKNSTCSVKSMSALSLSVQGYIPSYLEKDEP. Positions 15–24 are enriched in basic and acidic residues; the sequence is GDEKRWPDGP. Zn(2+) contacts are provided by C59, C62, C76, C79, C97, C103, C113, and C116. 2 consecutive NR C4-type zinc fingers follow at residues 59-79 and 97-121; these read CVVC…CEGC and CKYD…FRKC. The nuclear receptor DNA-binding region spans 59-133; sequence CVVCGDKATG…VCMAMDLVLD (75 aa). The NR LBD domain maps to 169-413; the sequence is SEWELIRHVT…PPLFLEVFED (245 aa). 3,3',5-triiodo-L-thyronine-binding residues include R234 and S283.

The protein belongs to the nuclear hormone receptor family. NR1 subfamily.

It is found in the nucleus. Nuclear hormone receptor that can act as a repressor or activator of transcription. High affinity receptor for thyroid hormones, including triiodothyronine and thyroxine. This is Thyroid hormone receptor alpha (thra1) from Salmo salar (Atlantic salmon).